The primary structure comprises 152 residues: Large ribosomal subunit protein bL9 (152 aa).

It belongs to the bacterial ribosomal protein bL9 family.

Binds to the 23S rRNA. The protein is Large ribosomal subunit protein bL9 of Pelagibacter ubique (strain HTCC1062).